The chain runs to 156 residues: MNINLTLIGQSIAFAIFVLFCMKFIWPALMGAISERQQKIADGLNAAEKAKADLASAEQSVEQELATAKAKAAALIEQANKSANQLIEEAKAQAQVEGERIRQQARESIDLEINQARESLRTQVSELAVLGAEQILKEKVDQQTHANMLNELAAKL.

The chain crosses the membrane as a helical span at residues 12 to 32 (IAFAIFVLFCMKFIWPALMGA).

It belongs to the ATPase B chain family. F-type ATPases have 2 components, F(1) - the catalytic core - and F(0) - the membrane proton channel. F(1) has five subunits: alpha(3), beta(3), gamma(1), delta(1), epsilon(1). F(0) has three main subunits: a(1), b(2) and c(10-14). The alpha and beta chains form an alternating ring which encloses part of the gamma chain. F(1) is attached to F(0) by a central stalk formed by the gamma and epsilon chains, while a peripheral stalk is formed by the delta and b chains.

The protein resides in the cell inner membrane. Its function is as follows. F(1)F(0) ATP synthase produces ATP from ADP in the presence of a proton or sodium gradient. F-type ATPases consist of two structural domains, F(1) containing the extramembraneous catalytic core and F(0) containing the membrane proton channel, linked together by a central stalk and a peripheral stalk. During catalysis, ATP synthesis in the catalytic domain of F(1) is coupled via a rotary mechanism of the central stalk subunits to proton translocation. In terms of biological role, component of the F(0) channel, it forms part of the peripheral stalk, linking F(1) to F(0). In Psychrobacter sp. (strain PRwf-1), this protein is ATP synthase subunit b.